Reading from the N-terminus, the 169-residue chain is Neurotensin/neuromedin N (169 aa).

Residues 1–22 (MRGMNLQLVCLTLLAFSSWSLC) form the signal peptide.

Belongs to the neurotensin family. Interacts with NTSR1. Interacts with SORT1. Interacts with SORL1. Neurotensin is cleaved and degraded by Angiotensin-converting enzyme (ACE) and neprilysin (MME).

Its subcellular location is the secreted. It localises to the cytoplasmic vesicle. The protein localises to the secretory vesicle. In terms of biological role, neurotensin may play an endocrine or paracrine role in the regulation of fat metabolism. It causes contraction of smooth muscle. The chain is Neurotensin/neuromedin N (Nts) from Mus musculus (Mouse).